The primary structure comprises 433 residues: Zinc finger protein CONSTANS-LIKE 15 (433 aa).

Residues Cys-9, Cys-12, Cys-32, His-37, Cys-52, Cys-55, Cys-75, and His-80 each contribute to the Zn(2+) site. The B box-type 1; atypical zinc finger occupies 9 to 51 (CDFCGERTAVLFCRADTAKLCLPCDQQVHTANLLSRKHVRSQI). The segment at 52 to 94 (CDNCGNEPVSVRCFTDNLILCQECDWDVHGSCSVSDAHVRSAV) adopts a B box-type 2; atypical zinc-finger fold. Residues 319 to 353 (DDYKRSTSGQVQPTKSESNNRPITFGSEKGSNSSS) form a disordered region. Residues 324–340 (STSGQVQPTKSESNNRP) show a composition bias toward polar residues. Residues 374 to 398 (TKADLERLAQNRGDAMQRYKEKRKT) are a coiled coil. A CCT domain is found at 385 to 427 (RGDAMQRYKEKRKTRRYDKTIRYESRKARADTRLRVRGRFVKA).

It belongs to the CONSTANS family.

The protein resides in the nucleus. This Arabidopsis thaliana (Mouse-ear cress) protein is Zinc finger protein CONSTANS-LIKE 15 (COL15).